Here is a 632-residue protein sequence, read N- to C-terminus: 2-hydroxyacyl-CoA lyase 2 (632 aa).

A helical transmembrane segment spans residues 13–33 (LFPSFLLLACGTLVAALLGAA). Residue glutamate 98 participates in thiamine diphosphate binding. The tract at residues 470 to 550 (DFVGTAAHLV…VMALVGNDAG (81 aa)) is thiamine pyrophosphate binding. Mg(2+) contacts are provided by aspartate 521 and asparagine 547.

Belongs to the TPP enzyme family. It depends on Mg(2+) as a cofactor. Requires thiamine diphosphate as cofactor. Expressed in all tissues tested, with highest expression in heart, pancreas and placenta.

The protein resides in the endoplasmic reticulum membrane. The catalysed reaction is 2-hydroxyoctadecanoyl-CoA = heptadecanal + formyl-CoA. The enzyme catalyses (2R)-hydroxyhexadecanoyl-CoA = pentadecanal + formyl-CoA. In terms of biological role, endoplasmic reticulum 2-OH acyl-CoA lyase involved in the cleavage (C1 removal) reaction in the fatty acid alpha-oxydation in a thiamine pyrophosphate (TPP)-dependent manner. Involved in the phytosphingosine degradation pathway. In Homo sapiens (Human), this protein is 2-hydroxyacyl-CoA lyase 2.